A 220-amino-acid chain; its full sequence is MGFQIAIDGPAASGKSTVARLLAEKLGFDHLNTGATYRAVAVYLHEKGLSPSSAEEEIENALKNLKIDYVNGRVYINGKDYTEKIQSPEAGVLASNFARLEVVRRHLVRIQREICDDKNIVVEGRDIGTVVLPNAHLKIFLTASLEARVERKLKEYQKRGLKVTKEEVERELISRDEQDSKRNVAPLKPAEDAVIIDTTSMSVEEVLDRILKLVRERMNT.

Residue 9–17 (GPAASGKST) coordinates ATP.

The protein belongs to the cytidylate kinase family. Type 1 subfamily.

The protein resides in the cytoplasm. The enzyme catalyses CMP + ATP = CDP + ADP. It carries out the reaction dCMP + ATP = dCDP + ADP. This is Cytidylate kinase from Thermotoga sp. (strain RQ2).